Reading from the N-terminus, the 693-residue chain is Elongation factor G (693 aa).

The 275-residue stretch at 8–282 (EKTRNIGIMA…AVLDYLPSPL (275 aa)) folds into the tr-type G domain. Residues 17–24 (AHVDAGKT), 81–85 (DTPGH), and 135–138 (NKMD) each bind GTP.

This sequence belongs to the TRAFAC class translation factor GTPase superfamily. Classic translation factor GTPase family. EF-G/EF-2 subfamily.

The protein resides in the cytoplasm. Its function is as follows. Catalyzes the GTP-dependent ribosomal translocation step during translation elongation. During this step, the ribosome changes from the pre-translocational (PRE) to the post-translocational (POST) state as the newly formed A-site-bound peptidyl-tRNA and P-site-bound deacylated tRNA move to the P and E sites, respectively. Catalyzes the coordinated movement of the two tRNA molecules, the mRNA and conformational changes in the ribosome. This Enterococcus faecalis (strain ATCC 700802 / V583) protein is Elongation factor G.